A 647-amino-acid polypeptide reads, in one-letter code: RalA-binding protein 1 (647 aa).

Disordered regions lie at residues 1–151 (MTEC…EKKC) and 163–186 (WKEK…APSL). Threonine 2 bears the N-acetylthreonine mark. Positions 24 to 33 (LTRTPSSEEI) are enriched in polar residues. Serine 29, serine 30, and serine 34 each carry phosphoserine. A Phosphothreonine modification is found at threonine 44. 2 positions are modified to phosphoserine: serine 48 and serine 62. Residues 52 to 68 (DILHEPPDIVSDDEKDH) are compositionally biased toward basic and acidic residues. 69 to 74 (GKKKGK) contributes to the ATP binding site. Residues 69 to 79 (GKKKGKFKKKE) are compositionally biased toward basic residues. Residues serine 92 and serine 93 each carry the phosphoserine modification. Residues 102-118 (KMKRSKGIHVFKKPSFS) are compositionally biased toward basic residues. A nuclear localization signal region spans residues 102–119 (KMKRSKGIHVFKKPSFSK). Positions 119 to 151 (KKKEKDFKIKEKPKEEKHKEEKHKEEKHKEKKC) are enriched in basic and acidic residues. Positions 154-219 (FTAADVVKQW…PAVFRECVDY (66 aa)) are mediates association with membranes and could form transmembrane domains. Residues 192–380 (APFADAVERT…VLLKQVTRPL (189 aa)) form the Rho-GAP domain. The tract at residues 403 to 499 (RRQEFLLNCL…LTEQEELLAM (97 aa)) is mediates interaction with RALA and RALB. 418–425 (GGIKDFSK) is an ATP binding site. Residues serine 461 and serine 463 each carry the phosphoserine modification. The interval 500–647 (EQFLRRQIAS…PSKDRKETPI (148 aa)) is mediates interaction with REPS1 and REPS2. 2 disordered regions span residues 525-550 (QSRQ…DEEE) and 601-647 (EQQL…ETPI). Residues 535–550 (EEYSSDSESESEDEEE) are compositionally biased toward acidic residues. The segment covering 628–647 (RAAKEQAKPSPSKDRKETPI) has biased composition (basic and acidic residues). Position 637 is a phosphoserine (serine 637).

As to quaternary structure, interacts with the GTP-bound form of RALA (via effector domain); during mitosis, recruits RALBP1 to the mitochondrion where it promotes DNM1L phosphorylation and mitochondrial fission. Interacts with DNM1L; mediates its mitotic kinase cyclin B-CDK1-mediated phosphorylation during mitosis to promote mitochondrial fission. Interacts with the mitotic kinase cyclin B-CDK1 during mitosis. Interacts with the GTP-bound form of RALB (via effector domain). Interacts with REPS1; the interaction is direct and does not affect RALA-binding nor GTPase activator activity of RALBP1. Interacts with REPS2; the interaction is direct and does not affect RALA-binding nor GTPase activator activity of RALBP1. Interacts with EPN1, NUMB and TFAP2A during interphase and mitosis. Interacts with AP2M1; as part of the AP2 complex. Interacts with CDC42. Interacts with RAC1. Post-translationally, tyrosine-phosphorylated upon stimulation of cells with EGF. May undergo proteolytic cleavage to give peptides which reassemble to form a transporter complex. Ubiquitously expressed.

It is found in the cell membrane. Its subcellular location is the cytoplasm. The protein localises to the cytosol. The protein resides in the cytoskeleton. It localises to the spindle pole. It is found in the nucleus. Its subcellular location is the mitochondrion. It carries out the reaction an S-substituted glutathione(in) + ATP + H2O = an S-substituted glutathione(out) + ADP + phosphate + H(+). The enzyme catalyses ATP + H2O + xenobioticSide 1 = ADP + phosphate + xenobioticSide 2.. It catalyses the reaction leukotriene C4(in) + ATP + H2O = leukotriene C4(out) + ADP + phosphate + H(+). Functionally, multifunctional protein that functions as a downstream effector of RALA and RALB. As a GTPase-activating protein/GAP can inactivate CDC42 and RAC1 by stimulating their GTPase activity. As part of the Ral signaling pathway, may also regulate ligand-dependent EGF and insulin receptors-mediated endocytosis. During mitosis, may act as a scaffold protein in the phosphorylation of EPSIN/EPN1 by the mitotic kinase cyclin B-CDK1, preventing endocytosis during that phase of the cell cycle. During mitosis, also controls mitochondrial fission as an effector of RALA. Recruited to mitochondrion by RALA, acts as a scaffold to foster the mitotic kinase cyclin B-CDK1-mediated phosphorylation and activation of DNM1L. Could also function as a primary ATP-dependent active transporter for glutathione conjugates of electrophiles. May also actively catalyze the efflux of a wide range of substrates including xenobiotics like doxorubicin (DOX) contributing to cell multidrug resistance. This Rattus norvegicus (Rat) protein is RalA-binding protein 1.